Reading from the N-terminus, the 168-residue chain is Photosystem I assembly protein Ycf3 (168 aa).

3 TPR repeats span residues 35 to 68, 72 to 105, and 120 to 153; these read AFTY…EIDP, SYIL…NPFL, and GEQA…TPGN.

Belongs to the Ycf3 family.

The protein resides in the plastid. It is found in the chloroplast thylakoid membrane. In terms of biological role, essential for the assembly of the photosystem I (PSI) complex. May act as a chaperone-like factor to guide the assembly of the PSI subunits. The sequence is that of Photosystem I assembly protein Ycf3 from Solanum tuberosum (Potato).